The chain runs to 296 residues: tRNA dimethylallyltransferase (296 aa).

11-18 (GPTAVGKT) is a binding site for ATP. Residue 13-18 (TAVGKT) participates in substrate binding. The interaction with substrate tRNA stretch occupies residues 36–39 (DSQQ).

Belongs to the IPP transferase family. Monomer. Requires Mg(2+) as cofactor.

It catalyses the reaction adenosine(37) in tRNA + dimethylallyl diphosphate = N(6)-dimethylallyladenosine(37) in tRNA + diphosphate. Catalyzes the transfer of a dimethylallyl group onto the adenine at position 37 in tRNAs that read codons beginning with uridine, leading to the formation of N6-(dimethylallyl)adenosine (i(6)A). The protein is tRNA dimethylallyltransferase of Streptococcus agalactiae serotype III (strain NEM316).